The sequence spans 265 residues: Interleukin-1 alpha (265 aa).

A propeptide spanning residues 1-108 is cleaved from the precursor; the sequence is MAKVPDLFED…DTEEVIMKPR (108 aa). Lys78 bears the N6-acetyllysine mark. A nuclear localization signal (NLS) region spans residues 78–82; it reads KKRRL. Position 83 is a phosphoserine (Ser83). Residues Asn98 and Asn137 are each glycosylated (N-linked (GlcNAc...) asparagine).

This sequence belongs to the IL-1 family. In terms of assembly, monomer. Interacts with TMED10; the interaction mediates the translocation from the cytoplasm into the ERGIC (endoplasmic reticulum-Golgi intermediate compartment) and thereby secretion. Interacts with IL1R1. Interacts with S100A13; this interaction is the first step in the export of IL1A, followed by direct translocation of this complex across the plasma membrane. In terms of processing, acetylated within its nuclear localization sequence, which impacts subcellular localization. Proteolytic processed by CAPN1 in a calcium-dependent manner. Cleavage from 31 kDa precursor to 18 kDa biologically active molecules. Post-translationally, phosphorylated. Phosphorylation greatly enhances susceptibility to digestion and promotes the conversion of pre-IL1A alpha to the biologically active IL1A.

Its subcellular location is the nucleus. The protein resides in the cytoplasm. The protein localises to the secreted. Functionally, cytokine constitutively present intracellularly in nearly all resting non-hematopoietic cells that plays an important role in inflammation and bridges the innate and adaptive immune systems. After binding to its receptor IL1R1 together with its accessory protein IL1RAP, forms the high affinity interleukin-1 receptor complex. Signaling involves the recruitment of adapter molecules such as MYD88, IRAK1 or IRAK4. In turn, mediates the activation of NF-kappa-B and the three MAPK pathways p38, p42/p44 and JNK pathways. Within the cell, acts as an alarmin and cell death results in its liberation in the extracellular space after disruption of the cell membrane to induce inflammation and alert the host to injury or damage. In addition to its role as a danger signal, which occurs when the cytokine is passively released by cell necrosis, directly senses DNA damage and acts as signal for genotoxic stress without loss of cell integrity. In Canis lupus familiaris (Dog), this protein is Interleukin-1 alpha (IL1A).